The sequence spans 499 residues: Tyrosine-protein kinase Blk (499 aa).

A disordered region spans residues 1–34; the sequence is MGLLSSKRQVSEKGKGWSPVKIRTQDKAPPPLPP. Gly-2 carries the N-myristoyl glycine lipid modification. Residues 52–112 enclose the SH3 domain; the sequence is EEERFVVALF…PSNFVAPVET (61 aa). One can recognise an SH2 domain in the interval 118–214; that stretch reads WFFRTISRKD…GLCQKLTLPC (97 aa). The Protein kinase domain occupies 235–488; that stretch reads LKLVRKLGSG…FLQSVLEDFY (254 aa). ATP is bound by residues 241-249 and Lys-263; that span reads LGSGQFGEV. Asp-354 (proton acceptor) is an active-site residue. Tyr-383 is modified (phosphotyrosine; by autocatalysis).

It belongs to the protein kinase superfamily. Tyr protein kinase family. SRC subfamily. Interacts with CBL (via SH2 domain). Interacts with CD79A and CD79B (via SH2 domain). In terms of processing, phosphorylated on tyrosine residues after antibody-mediated surface engagement of the B-cell antigen receptor (BCR). Post-translationally, ubiquitination of activated BLK by the UBE3A ubiquitin protein ligase leads to its degradation by the ubiquitin-proteasome pathway. Expressed in immature Vgamma2 gamma-delta T-cells (at protein level). Expressed in the B-cell lineage.

Its subcellular location is the cell membrane. The enzyme catalyses L-tyrosyl-[protein] + ATP = O-phospho-L-tyrosyl-[protein] + ADP + H(+). With respect to regulation, antibody-mediated surface engagement of the B-cell antigen receptor (BCR) which results in the phosphorylation of BLK on tyrosine residues, stimulates the enzymatic activity. Functionally, non-receptor tyrosine kinase involved in B-lymphocyte development, differentiation and signaling. B-cell receptor (BCR) signaling requires a tight regulation of several protein tyrosine kinases and phosphatases, and associated coreceptors. Binding of antigen to the B-cell antigen receptor (BCR) triggers signaling that ultimately leads to B-cell activation. Signaling through BLK plays an important role in transmitting signals through surface immunoglobulins and supports the pro-B to pre-B transition, as well as the signaling for growth arrest and apoptosis downstream of B-cell receptor. Specifically binds and phosphorylates CD79A at 'Tyr-188'and 'Tyr-199', as well as CD79B at 'Tyr-196' and 'Tyr-207'. Also phosphorylates the immunoglobulin G receptor FCGR2. With FYN and LYN, plays an essential role in pre-B-cell receptor (pre-BCR)-mediated NF-kappa-B activation. Also contributes to BTK activation by indirectly stimulating BTK intramolecular autophosphorylation. In pancreatic islets, acts as a modulator of beta-cells function through the up-regulation of PDX1 and NKX6-1 and consequent stimulation of insulin secretion in response to glucose. Phosphorylates CGAS, promoting retention of CGAS in the cytosol. In Mus musculus (Mouse), this protein is Tyrosine-protein kinase Blk (Blk).